We begin with the raw amino-acid sequence, 73 residues long: MKANIHPEYHKIKVVMTDGTEYETFSTWGTEGQVMNLDIDSKSHPAWTGGNQQLMDRGGRLSKFNKRFGGLGL.

The protein belongs to the bacterial ribosomal protein bL31 family. Type A subfamily. Part of the 50S ribosomal subunit.

Functionally, binds the 23S rRNA. This is Large ribosomal subunit protein bL31 from Allorhizobium ampelinum (strain ATCC BAA-846 / DSM 112012 / S4) (Agrobacterium vitis (strain S4)).